The chain runs to 28 residues: uncharacterized protein (28 aa).

It is found in the cell inner membrane. This is an uncharacterized protein from Escherichia coli (strain K12).